Here is a 494-residue protein sequence, read N- to C-terminus: Alpha-amylase-related protein (494 aa).

Positions 1-20 (MFKFTFALALCVLAAGLVLA) are cleaved as a signal peptide. Residue glutamine 21 is modified to Pyrrolidone carboxylic acid. Cysteine 48 and cysteine 104 are oxidised to a cystine. Ca(2+) is bound by residues asparagine 118, glutamine 169, and aspartate 178. Cysteine 157 and cysteine 171 are joined by a disulfide. Residue arginine 206 coordinates chloride. Aspartate 208 acts as the Nucleophile in catalysis. Histidine 212 is a binding site for Ca(2+). The active-site Proton donor is the glutamate 245. Residues asparagine 308 and arginine 343 each coordinate chloride. Disulfide bonds link cysteine 376–cysteine 382, cysteine 418–cysteine 441, and cysteine 448–cysteine 460.

Belongs to the glycosyl hydrolase 13 family. In terms of assembly, monomer. Requires Ca(2+) as cofactor. The cofactor is chloride.

It localises to the secreted. The catalysed reaction is Endohydrolysis of (1-&gt;4)-alpha-D-glucosidic linkages in polysaccharides containing three or more (1-&gt;4)-alpha-linked D-glucose units.. This chain is Alpha-amylase-related protein (Amyrel), found in Drosophila pseudoobscura pseudoobscura (Fruit fly).